A 62-amino-acid polypeptide reads, in one-letter code: Cobrotoxin II (62 aa).

Positions 1 to 16 are enriched in polar residues; that stretch reads LECHNQQSSQTPTTTG. Positions 1–23 are disordered; that stretch reads LECHNQQSSQTPTTTGCSGGENN. Cystine bridges form between C3–C24, C17–C41, C43–C54, and C55–C60.

Belongs to the three-finger toxin family. Short-chain subfamily. Type I alpha-neurotoxin sub-subfamily. In terms of tissue distribution, expressed by the venom gland.

It is found in the secreted. Functionally, binds to muscle nicotinic acetylcholine receptor (nAChR) and inhibit acetylcholine from binding to the receptor, thereby impairing neuromuscular transmission. This Naja kaouthia (Monocled cobra) protein is Cobrotoxin II.